Consider the following 67-residue polypeptide: Gallinacin-6 (67 aa).

An N-terminal signal peptide occupies residues Met1–Ala19. Positions Gly20–Ser25 are excised as a propeptide. 3 disulfides stabilise this stretch: Cys31-Cys60, Cys38-Cys53, and Cys43-Cys61.

The protein belongs to the beta-defensin family. In terms of tissue distribution, expressed in bone marrow, testis, ovary, lung and trachea. Expressed in the ovarian stroma, but not in the ovarian follicles.

It is found in the secreted. The protein resides in the cytoplasmic granule. Its function is as follows. Has bactericidal activity. Potent activity against S.typhimurium and S.entiriditis. In Gallus gallus (Chicken), this protein is Gallinacin-6 (GAL6).